Here is a 450-residue protein sequence, read N- to C-terminus: MSAHGDPKPMTARKGGALTGTAEVPGDKSISHRSLIFGAMAVGETRVTGLLEGQDVLDTASAMRAFGAEVAREDDGTWSIHGVGVGGFVEPDDVLDCGNSGTGVRLLMGAMATTPISVTFTGDASLRSRPMARVTDPLALFGTRAYGRAQGRLPMTLVGAEAPMPVRYATPVPSAQVKSAVLLAGLNAPGETVVIEAEATRDHSERMLAGFGAQISTEVTQEGRVITLTGQPELTPQVIAVPRDPSSAAFPVCAAIITEGSDVLVPNIGLNPTRAGLFETLRDMGADLTYENPREEGGEPVADLRAKFSPDMKGIEVPPERAASMIDEYPILSVVAANAEGTTVMRGVKELRVKESDRIAAMADGLRLNGIEVEDGPDWWIVHGRGPGGMAGGATVATHLDHRIAMSFLCAGFASQQGITIDDSGPIATSFPIFEPLMRDLGARLDRANA.

Residues 1–25 (MSAHGDPKPMTARKGGALTGTAEVP) are disordered. 3 residues coordinate 3-phosphoshikimate: K28, S29, and R33. Residue K28 participates in phosphoenolpyruvate binding. Phosphoenolpyruvate-binding residues include G101 and R129. Positions 174, 176, 327, and 354 each coordinate 3-phosphoshikimate. Q176 lines the phosphoenolpyruvate pocket. The active-site Proton acceptor is D327. The phosphoenolpyruvate site is built by R358 and R403.

It belongs to the EPSP synthase family. In terms of assembly, monomer.

The protein resides in the cytoplasm. It carries out the reaction 3-phosphoshikimate + phosphoenolpyruvate = 5-O-(1-carboxyvinyl)-3-phosphoshikimate + phosphate. It functions in the pathway metabolic intermediate biosynthesis; chorismate biosynthesis; chorismate from D-erythrose 4-phosphate and phosphoenolpyruvate: step 6/7. In terms of biological role, catalyzes the transfer of the enolpyruvyl moiety of phosphoenolpyruvate (PEP) to the 5-hydroxyl of shikimate-3-phosphate (S3P) to produce enolpyruvyl shikimate-3-phosphate and inorganic phosphate. The chain is 3-phosphoshikimate 1-carboxyvinyltransferase from Jannaschia sp. (strain CCS1).